Reading from the N-terminus, the 295-residue chain is Inositol monophosphatase 1 (295 aa).

Positions 73, 92, 94, 95, and 231 each coordinate Mg(2+). E73 provides a ligand contact to substrate. Substrate contacts are provided by residues 94-97 (IDGT) and D231.

This sequence belongs to the inositol monophosphatase superfamily. Requires Mg(2+) as cofactor.

It is found in the cytoplasm. The protein resides in the nucleus. It carries out the reaction a myo-inositol phosphate + H2O = myo-inositol + phosphate. It participates in polyol metabolism; myo-inositol biosynthesis; myo-inositol from D-glucose 6-phosphate: step 2/2. With respect to regulation, inhibited by Li(+) and Na(+). In terms of biological role, responsible for the provision of inositol required for synthesis of phosphatidylinositol and polyphosphoinositides. The chain is Inositol monophosphatase 1 (INM1) from Saccharomyces cerevisiae (strain ATCC 204508 / S288c) (Baker's yeast).